The following is a 273-amino-acid chain: Glutamate racemase (273 aa).

Substrate contacts are provided by residues 10–11 (DS) and 42–43 (YG). The active-site Proton donor/acceptor is the Cys73. 74–75 (NT) contributes to the substrate binding site. The active-site Proton donor/acceptor is the Cys184. Residue 185–186 (TH) coordinates substrate.

Belongs to the aspartate/glutamate racemases family.

It carries out the reaction L-glutamate = D-glutamate. It functions in the pathway cell wall biogenesis; peptidoglycan biosynthesis. In terms of biological role, provides the (R)-glutamate required for cell wall biosynthesis. The polypeptide is Glutamate racemase (Desulforudis audaxviator (strain MP104C)).